The following is a 523-amino-acid chain: 2-isopropylmalate synthase (523 aa).

In terms of domain architecture, Pyruvate carboxyltransferase spans 5–267 (VIIFDTTLRD…ETGINAKEIH (263 aa)). Residues D14, H202, H204, and N238 each coordinate Mn(2+). Residues 392–523 (KLAQLVVHSD…QKDRSELGGV (132 aa)) form a regulatory domain region.

It belongs to the alpha-IPM synthase/homocitrate synthase family. LeuA type 1 subfamily. In terms of assembly, homodimer. The cofactor is Mn(2+).

The protein localises to the cytoplasm. It carries out the reaction 3-methyl-2-oxobutanoate + acetyl-CoA + H2O = (2S)-2-isopropylmalate + CoA + H(+). The protein operates within amino-acid biosynthesis; L-leucine biosynthesis; L-leucine from 3-methyl-2-oxobutanoate: step 1/4. Its function is as follows. Catalyzes the condensation of the acetyl group of acetyl-CoA with 3-methyl-2-oxobutanoate (2-ketoisovalerate) to form 3-carboxy-3-hydroxy-4-methylpentanoate (2-isopropylmalate). The sequence is that of 2-isopropylmalate synthase from Shewanella sediminis (strain HAW-EB3).